A 369-amino-acid chain; its full sequence is C-C chemokine receptor type 9 (369 aa).

Topologically, residues 1–48 (MMPTELTSLIPGMFDDFSYDSTASTDDYMNLNFSSFFCKKNNVRQFAS) are extracellular. Asn32 is a glycosylation site (N-linked (GlcNAc...) asparagine). 2 disulfide bridges follow: Cys38-Cys289 and Cys119-Cys198. The chain crosses the membrane as a helical span at residues 49 to 74 (HFLPPLYWLVFIVGTLGNSLVILVYW). The Cytoplasmic portion of the chain corresponds to 75–85 (YCTRVKTMTDM). The helical transmembrane segment at 86–109 (FLLNLAIADLLFLATLPFWAIAAA) threads the bilayer. The Extracellular portion of the chain corresponds to 110 to 120 (GQWMFQTFMCK). Residues 121 to 150 (VVNSMYKMNFYSCVLLIMCISVDRYIAIVQ) form a helical membrane-spanning segment. The Cytoplasmic segment spans residues 151–159 (AMKAQVWRQ). A helical transmembrane segment spans residues 160-185 (KRLLYSKMVCITIWVMAAVLCTPEIL). The Extracellular portion of the chain corresponds to 186–208 (YSQVSGESGIATCTMVYPKDKNA). The helical transmembrane segment at 209 to 243 (KLKSAVLILKVTLGFFLPFMVMAFCYTIIIHTLVQ) threads the bilayer. Residues 244-248 (AKKSS) lie on the Cytoplasmic side of the membrane. A helical membrane pass occupies residues 249–283 (KHKALKVTITVLTVFIMSQFPYNSILVVQAVDAYA). Residues 284–290 (MFISNCT) are Extracellular-facing. Residues 291–321 (ISTNIDICFQVTQTIAFFHSCLNPVLYVFVG) form a helical membrane-spanning segment. Residues 322–369 (ERFRRDLVKTLKNLGCISQAQWVSFTRREGSLKLSSMLLETTSGALSL) are Cytoplasmic-facing.

It belongs to the G-protein coupled receptor 1 family. As to expression, highly expressed in the thymus and low in lymph nodes and spleen.

It is found in the cell membrane. Receptor for chemokine SCYA25/TECK. Subsequently transduces a signal by increasing the intracellular calcium ions level. The polypeptide is C-C chemokine receptor type 9 (Ccr9) (Mus musculus (Mouse)).